Reading from the N-terminus, the 302-residue chain is Quinolinate synthase (302 aa).

Iminosuccinate-binding residues include H24 and S41. Residue C86 coordinates [4Fe-4S] cluster. Iminosuccinate contacts are provided by residues 112–114 (YVN) and S129. Residue C171 coordinates [4Fe-4S] cluster. Iminosuccinate contacts are provided by residues 197 to 199 (HPE) and T214. A [4Fe-4S] cluster-binding site is contributed by C259.

This sequence belongs to the quinolinate synthase family. Type 2 subfamily. The cofactor is [4Fe-4S] cluster.

It is found in the cytoplasm. It catalyses the reaction iminosuccinate + dihydroxyacetone phosphate = quinolinate + phosphate + 2 H2O + H(+). It participates in cofactor biosynthesis; NAD(+) biosynthesis; quinolinate from iminoaspartate: step 1/1. In terms of biological role, catalyzes the condensation of iminoaspartate with dihydroxyacetone phosphate to form quinolinate. In Dehalococcoides mccartyi (strain CBDB1), this protein is Quinolinate synthase.